A 408-amino-acid chain; its full sequence is Histidine--tRNA ligase (408 aa).

Belongs to the class-II aminoacyl-tRNA synthetase family. In terms of assembly, homodimer.

It localises to the cytoplasm. It carries out the reaction tRNA(His) + L-histidine + ATP = L-histidyl-tRNA(His) + AMP + diphosphate + H(+). The protein is Histidine--tRNA ligase of Campylobacter lari (strain RM2100 / D67 / ATCC BAA-1060).